The following is a 317-amino-acid chain: MTKVYIAGAIPEVGLNLLKEHFEVDMYDGEGLIDKETLKKGVEHADALVSLLSTSVDKDIIDSANNLKIIANYGAGFNNIDVEYARQQNIDVTNTPHASTNATADLTIGLILSVARRIVEGDHLSRTTGFDGWAPLFFRGREVSGKTIGIIGLGEIGGAVAKRARAFDMDVLYTGPHRKEEKERDIGAKYVDLDTLLKNADFITINAAYNPSLHHMIDTEQFNKMKSTAYLINAGRGPIVNEQSLVEALDNKVIEGAALDVYEFEPEITDALKSFKNVVLTPHIGNATFEARDMMAKIVANDTIKKLNGDEPQFIVN.

NAD(+)-binding positions include Glu155 to Ile156, Ala234 to Arg236, and Asp260. Arg236 is a catalytic residue. Glu265 is an active-site residue. The Proton donor role is filled by His283. An NAD(+)-binding site is contributed by His283–Asn286.

It belongs to the D-isomer specific 2-hydroxyacid dehydrogenase family.

The protein is Putative 2-hydroxyacid dehydrogenase SE_1879 of Staphylococcus epidermidis (strain ATCC 12228 / FDA PCI 1200).